Here is a 245-residue protein sequence, read N- to C-terminus: Malonyl-[acyl-carrier protein] O-methyltransferase (245 aa).

It belongs to the methyltransferase superfamily.

It carries out the reaction malonyl-[ACP] + S-adenosyl-L-methionine = malonyl-[ACP] methyl ester + S-adenosyl-L-homocysteine. It participates in cofactor biosynthesis; biotin biosynthesis. Functionally, converts the free carboxyl group of a malonyl-thioester to its methyl ester by transfer of a methyl group from S-adenosyl-L-methionine (SAM). It allows to synthesize pimeloyl-ACP via the fatty acid synthetic pathway. The protein is Malonyl-[acyl-carrier protein] O-methyltransferase of Calditerrivibrio nitroreducens (strain DSM 19672 / NBRC 101217 / Yu37-1).